The sequence spans 364 residues: UDP-N-acetylglucosamine--N-acetylmuramyl-(pentapeptide) pyrophosphoryl-undecaprenol N-acetylglucosamine transferase 1 (364 aa).

Residues 10 to 12 (TGG), Asn-124, Ser-195, Ile-250, and Gln-295 each bind UDP-N-acetyl-alpha-D-glucosamine.

The protein belongs to the glycosyltransferase 28 family. MurG subfamily.

It localises to the cell membrane. It carries out the reaction di-trans,octa-cis-undecaprenyl diphospho-N-acetyl-alpha-D-muramoyl-L-alanyl-D-glutamyl-meso-2,6-diaminopimeloyl-D-alanyl-D-alanine + UDP-N-acetyl-alpha-D-glucosamine = di-trans,octa-cis-undecaprenyl diphospho-[N-acetyl-alpha-D-glucosaminyl-(1-&gt;4)]-N-acetyl-alpha-D-muramoyl-L-alanyl-D-glutamyl-meso-2,6-diaminopimeloyl-D-alanyl-D-alanine + UDP + H(+). The protein operates within cell wall biogenesis; peptidoglycan biosynthesis. Its function is as follows. Cell wall formation. Catalyzes the transfer of a GlcNAc subunit on undecaprenyl-pyrophosphoryl-MurNAc-pentapeptide (lipid intermediate I) to form undecaprenyl-pyrophosphoryl-MurNAc-(pentapeptide)GlcNAc (lipid intermediate II). The protein is UDP-N-acetylglucosamine--N-acetylmuramyl-(pentapeptide) pyrophosphoryl-undecaprenol N-acetylglucosamine transferase 1 of Bacillus cereus (strain ATCC 14579 / DSM 31 / CCUG 7414 / JCM 2152 / NBRC 15305 / NCIMB 9373 / NCTC 2599 / NRRL B-3711).